Reading from the N-terminus, the 204-residue chain is Tumor necrosis factor alpha-induced protein 8-like protein 3 (204 aa).

The segment covering 1–10 (MDSDSGEQSE) has biased composition (acidic residues). Positions 1–20 (MDSDSGEQSEGEPGTAAGPH) are disordered. The tract at residues 21–204 (VFSSKNLALQ…INKLLDDKIL (184 aa)) is binding to phosphoinositides.

Belongs to the TNFAIP8 family. As to expression, widely expressed (at protein level).

It is found in the cytoplasm. It localises to the cell membrane. Its function is as follows. Acts as a lipid transfer protein. Preferentially captures and shuttles two lipid second messengers, i.e., phosphatidylinositol 4,5- bisphosphate and phosphatidylinositol 3,4,5-trisphosphate and increases their levels in the plasma membrane. Additionally, may also function as a lipid-presenting protein to enhance the activity of the PI3K-AKT and MEK-ERK pathways. May act as a regulator of tumorigenesis through its activation of phospholipid signaling. The sequence is that of Tumor necrosis factor alpha-induced protein 8-like protein 3 (Tnfaip8l3) from Mus musculus (Mouse).